Consider the following 425-residue polypeptide: 3-phosphoshikimate 1-carboxyvinyltransferase (425 aa).

The 3-phosphoshikimate site is built by K23, S24, and R28. K23 contacts phosphoenolpyruvate. 2 residues coordinate phosphoenolpyruvate: G96 and R124. Residues T170, S171, Q172, S198, D314, and K341 each coordinate 3-phosphoshikimate. Q172 contributes to the phosphoenolpyruvate binding site. D314 functions as the Proton acceptor in the catalytic mechanism. Residues R345, R386, and K411 each coordinate phosphoenolpyruvate.

Belongs to the EPSP synthase family. As to quaternary structure, monomer.

The protein localises to the cytoplasm. The enzyme catalyses 3-phosphoshikimate + phosphoenolpyruvate = 5-O-(1-carboxyvinyl)-3-phosphoshikimate + phosphate. It functions in the pathway metabolic intermediate biosynthesis; chorismate biosynthesis; chorismate from D-erythrose 4-phosphate and phosphoenolpyruvate: step 6/7. Its function is as follows. Catalyzes the transfer of the enolpyruvyl moiety of phosphoenolpyruvate (PEP) to the 5-hydroxyl of shikimate-3-phosphate (S3P) to produce enolpyruvyl shikimate-3-phosphate and inorganic phosphate. This Nostoc sp. (strain PCC 7120 / SAG 25.82 / UTEX 2576) protein is 3-phosphoshikimate 1-carboxyvinyltransferase.